The primary structure comprises 46 residues: uncharacterized protein (46 aa).

This is an uncharacterized protein from Acidianus sp. F28 (AFV-2).